A 226-amino-acid chain; its full sequence is Urease accessory protein UreF (226 aa).

Belongs to the UreF family. As to quaternary structure, ureD, UreF and UreG form a complex that acts as a GTP-hydrolysis-dependent molecular chaperone, activating the urease apoprotein by helping to assemble the nickel containing metallocenter of UreC. The UreE protein probably delivers the nickel.

The protein localises to the cytoplasm. Functionally, required for maturation of urease via the functional incorporation of the urease nickel metallocenter. The chain is Urease accessory protein UreF from Janthinobacterium sp. (strain Marseille) (Minibacterium massiliensis).